The chain runs to 378 residues: Diacetylchitobiose uptake system ATP-binding protein MsiK (378 aa).

An ABC transporter domain is found at 4-236 (VTFDKATRVY…PANLFVAGFI (233 aa)). 38 to 45 (GPSGCGKS) serves as a coordination point for ATP.

The protein belongs to the ABC transporter superfamily. The DasABC-MsiK complex is composed of two ATP-binding proteins (MsiK), two transmembrane proteins (DasB and DasC) and a solute-binding protein (DasA). The NgcEFG-MsiK complex is composed of two ATP-binding proteins (MsiK), two transmembrane proteins (NgcF and NgcG) and a solute-binding protein (NgcE).

It localises to the cell membrane. Its function is as follows. Part of the ABC transporter complexes DasABC-MsiK and NgcEFG-MsiK involved in N,N'-diacetylchitobiose ((GlcNAc)2) uptake. Responsible for energy coupling to the transport system. This is Diacetylchitobiose uptake system ATP-binding protein MsiK from Streptomyces coelicolor (strain ATCC BAA-471 / A3(2) / M145).